We begin with the raw amino-acid sequence, 591 residues long: Aspartate--tRNA ligase (591 aa).

Glu176 contributes to the L-aspartate binding site. Residues 200-203 (QILK) are aspartate. Arg222 serves as a coordination point for L-aspartate. Residues 222-224 (RDE) and Gln231 contribute to the ATP site. Residue His450 participates in L-aspartate binding. ATP is bound at residue Glu484. Arg491 contributes to the L-aspartate binding site. Residue 536–539 (GLDR) coordinates ATP.

The protein belongs to the class-II aminoacyl-tRNA synthetase family. Type 1 subfamily. Homodimer.

The protein localises to the cytoplasm. The enzyme catalyses tRNA(Asp) + L-aspartate + ATP = L-aspartyl-tRNA(Asp) + AMP + diphosphate. Its function is as follows. Catalyzes the attachment of L-aspartate to tRNA(Asp) in a two-step reaction: L-aspartate is first activated by ATP to form Asp-AMP and then transferred to the acceptor end of tRNA(Asp). The protein is Aspartate--tRNA ligase of Listeria monocytogenes serovar 1/2a (strain ATCC BAA-679 / EGD-e).